The primary structure comprises 840 residues: Sorting nexin-25 (840 aa).

The PXA domain occupies 1–164 (MDRVLRDVFD…MLLRQLEYRE (164 aa)). Positions 287-401 (QFEDIMTNPF…LVSDLYEKLM (115 aa)) constitute an RGS domain. Residues 404-437 (EEEEEPDAQLASEKDELGSGGEAGEEAVEGTSGV) form a disordered region. Residues 446 to 494 (IKLRELNEKLEYKRQALSSIQNAPKPDKKIISKLKDEILLIEKECTALQ) are a coiled coil. A PX domain is found at 508–628 (GLWRASITSA…AFLSPSPDYL (121 aa)). Ser665 is modified (phosphoserine).

Belongs to the sorting nexin family.

It is found in the endosome membrane. May be involved in several stages of intracellular trafficking. This Mus musculus (Mouse) protein is Sorting nexin-25 (Snx25).